Consider the following 121-residue polypeptide: Basic phospholipase A2 homolog 2 (121 aa).

7 disulfides stabilise this stretch: C26-C115, C28-C44, C43-C95, C49-C121, C50-C88, C57-C81, and C75-C86. The important for membrane-damaging activities in eukaryotes and bacteria; heparin-binding stretch occupies residues K105–K117.

This sequence belongs to the phospholipase A2 family. Group II subfamily. K49 sub-subfamily. In terms of assembly, homodimer; non-covalently linked (probable alternative/compact dimer conformation in solution). As to expression, expressed by the venom gland.

Its subcellular location is the secreted. In terms of biological role, snake venom phospholipase A2 homolog that lacks enzymatic activity. Is myotoxic and displays edema-inducing activities in mouse paw. Also displays cytotoxic activity against myotubes. A model of myotoxic mechanism has been proposed: an apo Lys49-PLA2 is activated by the entrance of a hydrophobic molecule (e.g. fatty acid) at the hydrophobic channel of the protein leading to a reorientation of a monomer. This reorientation causes a transition between 'inactive' to 'active' states, causing alignment of C-terminal and membrane-docking sites (MDoS) side-by-side and putting the membrane-disruption sites (MDiS) in the same plane, exposed to solvent and in a symmetric position for both monomers. The MDoS region stabilizes the toxin on membrane by the interaction of charged residues with phospholipid head groups. Subsequently, the MDiS region destabilizes the membrane with penetration of hydrophobic residues. This insertion causes a disorganization of the membrane, allowing an uncontrolled influx of ions (i.e. calcium and sodium), and eventually triggering irreversible intracellular alterations and cell death. In Bothrops brazili (Brazil's lancehead), this protein is Basic phospholipase A2 homolog 2.